The primary structure comprises 89 residues: Small ribosomal subunit protein uS17 (89 aa).

The protein belongs to the universal ribosomal protein uS17 family. As to quaternary structure, part of the 30S ribosomal subunit.

Its function is as follows. One of the primary rRNA binding proteins, it binds specifically to the 5'-end of 16S ribosomal RNA. This chain is Small ribosomal subunit protein uS17, found in Lactiplantibacillus plantarum (strain ATCC BAA-793 / NCIMB 8826 / WCFS1) (Lactobacillus plantarum).